A 249-amino-acid chain; its full sequence is 5'-nucleotidase SurE (249 aa).

A divalent metal cation-binding residues include Asp-8, Asp-9, Ser-39, and Asn-91.

The protein belongs to the SurE nucleotidase family. A divalent metal cation serves as cofactor.

Its subcellular location is the cytoplasm. It catalyses the reaction a ribonucleoside 5'-phosphate + H2O = a ribonucleoside + phosphate. Nucleotidase that shows phosphatase activity on nucleoside 5'-monophosphates. In Pseudomonas aeruginosa (strain UCBPP-PA14), this protein is 5'-nucleotidase SurE.